The chain runs to 179 residues: Large ribosomal subunit protein uL6 (179 aa).

This sequence belongs to the universal ribosomal protein uL6 family. Part of the 50S ribosomal subunit.

In terms of biological role, this protein binds to the 23S rRNA, and is important in its secondary structure. It is located near the subunit interface in the base of the L7/L12 stalk, and near the tRNA binding site of the peptidyltransferase center. This is Large ribosomal subunit protein uL6 from Bifidobacterium adolescentis (strain ATCC 15703 / DSM 20083 / NCTC 11814 / E194a).